Consider the following 341-residue polypeptide: Methionine import ATP-binding protein MetN 3 (341 aa).

One can recognise an ABC transporter domain in the interval 2 to 241; sequence IEFQNVTKTF…PSHETTKRFI (240 aa). Residue 38–45 participates in ATP binding; it reads GFSGAGKS.

It belongs to the ABC transporter superfamily. Methionine importer (TC 3.A.1.24) family. In terms of assembly, the complex is composed of two ATP-binding proteins (MetN), two transmembrane proteins (MetI) and a solute-binding protein (MetQ).

The protein localises to the cell membrane. The catalysed reaction is L-methionine(out) + ATP + H2O = L-methionine(in) + ADP + phosphate + H(+). It catalyses the reaction D-methionine(out) + ATP + H2O = D-methionine(in) + ADP + phosphate + H(+). Part of the ABC transporter complex MetNIQ involved in methionine import. Responsible for energy coupling to the transport system. This is Methionine import ATP-binding protein MetN 3 from Oceanobacillus iheyensis (strain DSM 14371 / CIP 107618 / JCM 11309 / KCTC 3954 / HTE831).